The following is a 269-amino-acid chain: Formamidopyrimidine-DNA glycosylase (269 aa).

Pro2 acts as the Schiff-base intermediate with DNA in catalysis. The active-site Proton donor is Glu3. The Proton donor; for beta-elimination activity role is filled by Lys57. The DNA site is built by His90, Arg109, and Lys150. An FPG-type zinc finger spans residues 235-269 (QVYGRKGEPCRVCGTPIVATKHAQRATFYCRHCQK). The active-site Proton donor; for delta-elimination activity is Arg259.

It belongs to the FPG family. In terms of assembly, monomer. Zn(2+) is required as a cofactor.

The catalysed reaction is Hydrolysis of DNA containing ring-opened 7-methylguanine residues, releasing 2,6-diamino-4-hydroxy-5-(N-methyl)formamidopyrimidine.. It carries out the reaction 2'-deoxyribonucleotide-(2'-deoxyribose 5'-phosphate)-2'-deoxyribonucleotide-DNA = a 3'-end 2'-deoxyribonucleotide-(2,3-dehydro-2,3-deoxyribose 5'-phosphate)-DNA + a 5'-end 5'-phospho-2'-deoxyribonucleoside-DNA + H(+). In terms of biological role, involved in base excision repair of DNA damaged by oxidation or by mutagenic agents. Acts as a DNA glycosylase that recognizes and removes damaged bases. Has a preference for oxidized purines, such as 7,8-dihydro-8-oxoguanine (8-oxoG). Has AP (apurinic/apyrimidinic) lyase activity and introduces nicks in the DNA strand. Cleaves the DNA backbone by beta-delta elimination to generate a single-strand break at the site of the removed base with both 3'- and 5'-phosphates. The chain is Formamidopyrimidine-DNA glycosylase from Salmonella enteritidis PT4 (strain P125109).